The following is a 149-amino-acid chain: UPF0208 membrane protein VFMJ11_0876 (149 aa).

The next 2 membrane-spanning stretches (helical) occupy residues 41–61 (FAVK…MVFN) and 69–89 (AIII…WLGN).

The protein belongs to the UPF0208 family.

The protein localises to the cell inner membrane. The chain is UPF0208 membrane protein VFMJ11_0876 from Aliivibrio fischeri (strain MJ11) (Vibrio fischeri).